The chain runs to 1174 residues: Male determiner protein Mdmd(II) (1174 aa).

Basic and acidic residues predominate over residues 1 to 15; sequence MNATDAESRKPENKP. Disordered stretches follow at residues 1–51, 80–109, and 136–259; these read MNAT…SGQR, KDGSNEMLPKEDSINTNHNYTTDSNEHPVE, and KQLS…LRRS. Positions 16–35 are enriched in low complexity; sequence SSESSSSGSTSGSSDGEVSS. Residues 36–47 show a composition bias toward polar residues; that stretch reads KTYFKNNKSKVL. Residues 80 to 92 are compositionally biased toward basic and acidic residues; the sequence is KDGSNEMLPKEDS. Residues 93 to 102 are compositionally biased toward polar residues; sequence INTNHNYTTD. The segment covering 138–153 has biased composition (low complexity); sequence LSAYRSRSRSTRLSYS. Basic and acidic residues predominate over residues 183–200; that stretch reads HGRDSSTTKRSVSRDKDN. Residues 201–223 show a composition bias toward basic residues; that stretch reads RLRRRIGSSRSHTRSHSRFRRSE. A compositionally biased stretch (basic and acidic residues) spans 235 to 259; that stretch reads RSQERRHERRRSMSSDYERIALRRS. The MIF4G domain maps to 348 to 531; that stretch reads KKYIHGYINK…KVLFQVRRDG (184 aa). Residues 597–608 are compositionally biased toward low complexity; that stretch reads DSDGSFGSGSNS. The interval 597–616 is disordered; sequence DSDGSFGSGSNSETALSDCD. The region spanning 641 to 757 is the MI domain; the sequence is ALRRTIYLTL…SWDVLDCIKL (117 aa). The span at 840–857 shows a compositional bias: low complexity; sequence SAPSSSSSSSLSSELSAP. Disordered stretches follow at residues 840-1045 and 1095-1133; these read SAPS…SRTK and RKDNYGNRQNHEISQRHDSEIKRRREERKKRHHEKNHSR. Residues 869 to 909 show a composition bias toward basic residues; sequence KKKHKGKNKKMTKKKNPSKKKEKTKKIVGKNKIAAKNKTIK. The segment covering 910 to 924 has biased composition (basic and acidic residues); that stretch reads RRTDKDNSSSKDNFL. Residues 926–957 show a composition bias toward low complexity; sequence SESSSNESISLDSLSSELFAPSSYSSSESSND. Residues 963-1001 show a composition bias toward basic residues; it reads KHKGKNKKMTKKKNPSNKREKTKKKLSKNKKAPNKNTKK. Residues 1010–1020 show a composition bias toward low complexity; that stretch reads SSESSISESKS. Residues 1034-1045 show a composition bias toward basic residues; the sequence is RKKRVTSKSRTK. Residues 1095–1118 are compositionally biased toward basic and acidic residues; the sequence is RKDNYGNRQNHEISQRHDSEIKRR. Residues 1119 to 1130 show a composition bias toward basic residues; that stretch reads REERKKRHHEKN.

Belongs to the CWC22 family. Component of the spliceosome C complex.

Its subcellular location is the nucleus speckle. Functionally, male determiner protein (M-factor) that controls male somatic sexual differentiation. Acts as a dominant factor that regulates the mRNA splicing of transformer (tra) and doublesex (dsx) transcripts and promotes expression of male splice forms of tra and dsx. Probably acts as a component of the spliceosome C complex required for mRNA splicing factor and exon-junction complex (EJC) assembly. Hinders eIF4AIII from non-specifically binding RNA and escorts it to the splicing machinery to promote EJC assembly on mature mRNAs. The sequence is that of Male determiner protein Mdmd(II) from Musca domestica (House fly).